A 401-amino-acid chain; its full sequence is Phosrestin-1 (401 aa).

S366 is subject to Phosphoserine; by CaMK.

Belongs to the arrestin family. Post-translationally, phosphorylated upon light exposure. In terms of tissue distribution, expressed in photoreceptor cells.

It is found in the cell projection. The protein resides in the rhabdomere. Functionally, regulates photoreceptor cell deactivation. Arr1 and Arr2 proteins are mediators of rhodopsin inactivation and are essential for the termination of the phototransduction cascade. Involved in regulating normal cycles of per nuclear accumulation in brain circadian neurons and thus is important for normal circadian behavior. In the dark, functions with Arr1 to promote the formation of cytosolic Bdbt foci, which are required for dco localization to photoreceptor nuclei where it phosphorylates and activates degradation of per. The protein is Phosrestin-1 (Arr2) of Drosophila melanogaster (Fruit fly).